The following is a 263-amino-acid chain: HTH-type transcriptional repressor NanR (263 aa).

The segment at 1 to 23 is disordered; that stretch reads MSPMNAFDPQAEDSTTTIGRNLR. Positions 30–98 constitute an HTH gntR-type domain; it reads KKLSEMVEEE…NGERARVSRP (69 aa). A DNA-binding region (H-T-H motif) is located at residues 58-77; it reads ERELMAFFNVGRPSVREALA.

Belongs to the NanR family.

Its function is as follows. Transcriptional repressor that controls expression of the genes required for the catabolism of sialic acids. This Escherichia coli O45:K1 (strain S88 / ExPEC) protein is HTH-type transcriptional repressor NanR.